The chain runs to 369 residues: Phospho-N-acetylmuramoyl-pentapeptide-transferase (369 aa).

10 helical membrane-spanning segments follow: residues 13 to 33 (ISGI…ALTL), 49 to 69 (LPLL…VPLL), 95 to 115 (MGGI…SNFA), 119 to 139 (LAVS…DWQI), 154 to 174 (LALQ…NQPA), 183 to 203 (WVSF…FVLV), 215 to 235 (IDGL…AIVA), 237 to 257 (TSPA…GFLA), 281 to 301 (AVAL…IFFV), and 346 to 366 (VVSS…AIAS).

This sequence belongs to the glycosyltransferase 4 family. MraY subfamily. Mg(2+) is required as a cofactor.

It localises to the cell inner membrane. The enzyme catalyses UDP-N-acetyl-alpha-D-muramoyl-L-alanyl-gamma-D-glutamyl-meso-2,6-diaminopimeloyl-D-alanyl-D-alanine + di-trans,octa-cis-undecaprenyl phosphate = di-trans,octa-cis-undecaprenyl diphospho-N-acetyl-alpha-D-muramoyl-L-alanyl-D-glutamyl-meso-2,6-diaminopimeloyl-D-alanyl-D-alanine + UMP. Its pathway is cell wall biogenesis; peptidoglycan biosynthesis. In terms of biological role, catalyzes the initial step of the lipid cycle reactions in the biosynthesis of the cell wall peptidoglycan: transfers peptidoglycan precursor phospho-MurNAc-pentapeptide from UDP-MurNAc-pentapeptide onto the lipid carrier undecaprenyl phosphate, yielding undecaprenyl-pyrophosphoryl-MurNAc-pentapeptide, known as lipid I. This chain is Phospho-N-acetylmuramoyl-pentapeptide-transferase, found in Nostoc sp. (strain PCC 7120 / SAG 25.82 / UTEX 2576).